We begin with the raw amino-acid sequence, 61 residues long: Large ribosomal subunit protein bL28 (61 aa).

Positions 1–26 (MAKDFVTGKHTRFGNTRSHALNHSRR) are disordered.

The protein belongs to the bacterial ribosomal protein bL28 family.

The protein is Large ribosomal subunit protein bL28 of Pediococcus pentosaceus (strain ATCC 25745 / CCUG 21536 / LMG 10740 / 183-1w).